Reading from the N-terminus, the 1761-residue chain is 6-methylsalicylic acid synthase AOL_s00215g283 (1761 aa).

Residues Q18–Q443 form the Ketosynthase family 3 (KS3) domain. Residues C190, H325, and H367 each act as for beta-ketoacyl synthase activity in the active site. Residues V554–A870 are malonyl-CoA:ACP transacylase (MAT) domain. S641 acts as the For malonyltransferase activity in catalysis. The segment at H918 to K1038 is N-terminal hotdog fold. The interval H918–G1187 is dehydratase (DH) domain. A PKS/mFAS DH domain is found at H918 to A1191. Residue H950 is the Proton acceptor; for dehydratase activity of the active site. The segment at L1050–A1191 is C-terminal hotdog fold. D1113 (proton donor; for dehydratase activity) is an active-site residue. Residues G1399–N1587 form a ketoreductase (KR) domain region. Positions P1654–S1680 are disordered. In terms of domain architecture, Carrier spans E1686–I1761. The residue at position 1721 (S1721) is an O-(pantetheine 4'-phosphoryl)serine.

The catalysed reaction is 3 malonyl-CoA + acetyl-CoA + NADPH + 3 H(+) = 6-methylsalicylate + 3 CO2 + NADP(+) + 4 CoA + H2O. Its pathway is secondary metabolite biosynthesis; terpenoid biosynthesis. In terms of biological role, 6-methylsalicylic acid synthase; part of the gene cluster that mediates the biosynthesis of sesquiterpenyl epoxy-cyclohexenoids (SECs) such as anthrobotrisins and arthrosporols, metabolites that possess a novel hybrid carbon skeleton consisting of a polyketide-derived epoxycyclohexenol combined with a terpenoid-derived monocyclic sesquiterpenol substructure (PKS-PTS hybrid). The SEC pathway plays an important role for fungal soil colonization via decreasing fungal nematode-capturing ability. Within the pathway, the polyketide synthase (PKS) AOL_s00215g283 catalyzes the biosynthesis of 6-methylsalicylic acid (6-MSA) via condensation of 1 acetate and 3 malonate units. AOL_s00215g283 performs a series of programmed reactions including Claisen condensation, dehydration, reduction, and cyclization to yield 6-MSA. The pathway begins with the biosynthesis of 6-methylsalicylic acid (6-MSA), the first precursor of the polyketide-derived epoxycyclohexenol in arthrosporols, by the polyketide synthase (PKS) AOL_s00215g283. The 6-methylsalicylic acid decarboxylase AOL_s00215g281 then catalyzes the decarboxylation of 6-methylsalicylic acid to yield m-cresol. The cytochrome P450 monooxygenase AOL_s00215g282 further oxidizes m-cresol to yield toluquinol. With the assistance of the oxidoreductase AOL_s00215g277, the polyprenyl transferase AOL_s00215g276 catalyzes the farnesylation of toluquinol to produce farnesyl hydroquinone, the hybrid precursor for biosynthesis of SECs. Farnesyl hydroquinone undergoes epoxidation and then subsequent dehydrogenation to form farnesyl epoxy-quinone, the first and simplest SEC. The cytochrome P450 monooxygenase AOL_s00215g278 and the FAD-dependent monooxygenase AOL_s00215g279 might be involved in the oxygenation of the phenol moiety, most likely in the epoxy formation. The cytochrome P450 monooxygenases AOL_s00215g274 and AOL_s00215g280 are involved in specific regional ketone reductions at respectively C-4 and C-1 of farnesyl epoxy-quinone PubMed:33823587. This chain is 6-methylsalicylic acid synthase AOL_s00215g283, found in Arthrobotrys oligospora (strain ATCC 24927 / CBS 115.81 / DSM 1491) (Nematode-trapping fungus).